The following is a 270-amino-acid chain: Fibroblast growth factor 5 (270 aa).

The N-terminal stretch at 1 to 20 (MSLSFLLLLFLSHLILSAWA) is a signal peptide. The interval 26–83 (LAPKGQPGPAATGRNPAGASSSRSSRGTTSSSSSSVSSSHSASLGNQGSGLEQSSFQW) is disordered. Low complexity predominate over residues 43 to 68 (GASSSRSSRGTTSSSSSSVSSSHSAS). Residues 69-83 (LGNQGSGLEQSSFQW) are compositionally biased toward polar residues. Asn-112 carries N-linked (GlcNAc...) asparagine glycosylation. Residues 236 to 257 (PEKKKPPSPVKPKVPLSAPRKS) form a disordered region.

The protein belongs to the heparin-binding growth factors family. In terms of assembly, interacts with FGFR1 and FGFR2. Affinity between fibroblast growth factors (FGFs) and their receptors is increased by heparan sulfate glycosaminoglycans that function as coreceptors. Expressed in skin.

The protein localises to the secreted. Functionally, plays an important role in the regulation of cell proliferation and cell differentiation. Required for normal regulation of the hair growth cycle. Functions as an inhibitor of hair elongation by promoting progression from anagen, the growth phase of the hair follicle, into catagen the apoptosis-induced regression phase. In Felis catus (Cat), this protein is Fibroblast growth factor 5 (FGF5).